A 361-amino-acid chain; its full sequence is Anthranilate phosphoribosyltransferase (361 aa).

Residues Gly101, 104-105 (GD), Thr109, 111-114 (NIST), 129-137 (KHGNRGVSS), and Ser141 contribute to the 5-phospho-alpha-D-ribose 1-diphosphate site. Gly101 lines the anthranilate pocket. Ser113 is a binding site for Mg(2+). Residue Asn132 coordinates anthranilate. An anthranilate-binding site is contributed by Arg187. Mg(2+)-binding residues include Asp245 and Glu246.

Belongs to the anthranilate phosphoribosyltransferase family. As to quaternary structure, homodimer. The cofactor is Mg(2+).

The enzyme catalyses N-(5-phospho-beta-D-ribosyl)anthranilate + diphosphate = 5-phospho-alpha-D-ribose 1-diphosphate + anthranilate. It functions in the pathway amino-acid biosynthesis; L-tryptophan biosynthesis; L-tryptophan from chorismate: step 2/5. Functionally, catalyzes the transfer of the phosphoribosyl group of 5-phosphorylribose-1-pyrophosphate (PRPP) to anthranilate to yield N-(5'-phosphoribosyl)-anthranilate (PRA). The protein is Anthranilate phosphoribosyltransferase of Shewanella denitrificans (strain OS217 / ATCC BAA-1090 / DSM 15013).